A 431-amino-acid polypeptide reads, in one-letter code: Protein PIN-LIKES 6 (431 aa).

Residues 1–29 (MIARILAALADSMEMPVAAGGGSVLGTIK) are Lumenal-facing. A helical transmembrane segment spans residues 30 to 50 (IAVMPIAKVFTMCFLGLLMAS). Residues 51–66 (KYVNILPPSGRKLLNG) are Cytoplasmic-facing. A helical transmembrane segment spans residues 67–87 (LVFSLLLPCLIFSQLGQAVTL). Topologically, residues 88-93 (QKMLQW) are lumenal. A helical transmembrane segment spans residues 94–114 (WFIPVNVVLGTISGSIIGFIV). Residues 115–128 (ASIVRPPYPYFKFT) lie on the Cytoplasmic side of the membrane. The helical transmembrane segment at 129 to 149 (IIQIGVGNIGNVPLVLLAALC) threads the bilayer. Residues 150–169 (RDTSNPFGDSEKCSIDGTAY) lie on the Lumenal side of the membrane. Residues 170 to 190 (ISFGQWVGAIILYTYVYQMFA) traverse the membrane as a helical segment. Topologically, residues 191 to 268 (PPPEGFDAEE…FLYEKLKLKQ (78 aa)) are cytoplasmic. A helical membrane pass occupies residues 269–289 (IVQPAIVASILAMILGAIPFT). At 290 to 306 (KKLIFTNGAPLFFFTDS) the chain is on the lumenal side. Residues 307–327 (CMILGDAMIPCILLALGGNLI) traverse the membrane as a helical segment. Residues 328 to 340 (NGPGSSKLGFKTT) are Cytoplasmic-facing. A helical membrane pass occupies residues 341 to 361 (AAIIIGRLVLVPPVGLGIVTV). The Lumenal portion of the chain corresponds to 362–376 (ADKLGFLPADDKMFR). A helical transmembrane segment spans residues 377–397 (FVLLLQHTMPTSVLSGAVANL). The Cytoplasmic segment spans residues 398-406 (RGCGRESAA). A helical membrane pass occupies residues 407–427 (VLFWVHIFAIFSMAGWMVLYI). Residues 428-431 (NILF) lie on the Lumenal side of the membrane.

This sequence belongs to the auxin efflux carrier (TC 2.A.69.2) family. Expressed in seedlings, rosette and cauline leaves, stems and flowers.

It is found in the endoplasmic reticulum membrane. Its function is as follows. Involved in cellular auxin homeostasis by regulating auxin metabolism. Regulates intracellular auxin accumulation at the endoplasmic reticulum and thus auxin availability for nuclear auxin signaling. This chain is Protein PIN-LIKES 6, found in Arabidopsis thaliana (Mouse-ear cress).